Reading from the N-terminus, the 378-residue chain is H repeat-associated putative transposase YhhI (378 aa).

The protein belongs to the transposase 11 family.

This Escherichia coli (strain K12) protein is H repeat-associated putative transposase YhhI (yhhI).